The primary structure comprises 295 residues: Taste receptor type 2 member 120 (295 aa).

At 1-5 the chain is on the extracellular side; the sequence is MNLVE. The helical transmembrane segment at 6-26 threads the bilayer; the sequence is WIVTIIMMTEFLLGNCANVFI. At 27-45 the chain is on the cytoplasmic side; it reads TIVNFIDCVKRRKISSADR. The helical transmembrane segment at 46–66 threads the bilayer; it reads IITAIAIFRIGLLWAMLTNWH. Residues 67–80 lie on the Extracellular side of the membrane; it reads SHVFTPDTDNLQMR. A helical transmembrane segment spans residues 81-101; the sequence is VFGGITWAITNHFTTWLGTIL. Topologically, residues 102–127 are cytoplasmic; the sequence is SMFYLFKIANFSNSLFLHLKRKLDNV. The helical transmembrane segment at 128-148 threads the bilayer; the sequence is LLVIFLGSSLFLVAYLGMVNI. The Extracellular portion of the chain corresponds to 149–177; it reads KKIAWMSIHEGNVTTKSKLKHVTSITNML. Residue Asn160 is glycosylated (N-linked (GlcNAc...) asparagine). The helical transmembrane segment at 178–198 threads the bilayer; that stretch reads LFSLINIVPFGISLNCVLLLI. At 199 to 228 the chain is on the cytoplasmic side; the sequence is YSLSKHLKNMKFYGKGCQDQSTMVHIKALQ. A helical membrane pass occupies residues 229–249; that stretch reads TVVSFLLLYATYSSCVIISGW. Over 250–255 the chain is Extracellular; that stretch reads SLQNAP. A helical transmembrane segment spans residues 256-276; it reads VFLFCVTIGSFYPAGHSCILI. Over 277–295 the chain is Cytoplasmic; the sequence is WGNQKLKQVFLLLLRQMRC.

The protein belongs to the G-protein coupled receptor T2R family.

The protein localises to the membrane. In terms of biological role, putative taste receptor which may play a role in the perception of bitterness. The sequence is that of Taste receptor type 2 member 120 from Mus musculus (Mouse).